Reading from the N-terminus, the 1062-residue chain is Translation initiation factor IF-2 (1062 aa).

Residues 34 to 463 form a disordered region; it reads SASSTVEAPV…RMGAMVPRGN (430 aa). A compositionally biased stretch (pro residues) spans 76 to 121; sequence PTPPSRPGLAPRPGPRPVPGRPGPLGRPGPATPAPSPSPASPPLPA. Positions 122–153 are enriched in low complexity; it reads SPVQASPVQASPVQASPTSAPAAPRPAAASAV. Residues 154-178 are compositionally biased toward pro residues; it reads PAPPMPSVPSAPSGPRPGPNAPRPG. The segment covering 198–214 has biased composition (gly residues); the sequence is TAGGPTAGGPTAGGPTA. Residues 294–305 are compositionally biased toward pro residues; the sequence is RPTPGGMPPRPG. Composition is skewed to gly residues over residues 307 to 324 and 344 to 430; these read PRSG…GTGG and PGGG…GGRG. The segment covering 431–442 has biased composition (basic residues); it reads RPGRQRKSKRAK. Residues 555-727 enclose the tr-type G domain; the sequence is SRPPVVTVMG…IVLTADASLD (173 aa). Residues 564–571 form a G1 region; the sequence is GHVDHGKT. 564-571 lines the GTP pocket; that stretch reads GHVDHGKT. Residues 589-593 are G2; it reads GITQH. The tract at residues 614–617 is G3; that stretch reads DTPG. GTP contacts are provided by residues 614-618 and 668-671; these read DTPGH and NKVD. Residues 668-671 are G4; sequence NKVD. The G5 stretch occupies residues 704-706; it reads SAR.

Belongs to the TRAFAC class translation factor GTPase superfamily. Classic translation factor GTPase family. IF-2 subfamily.

The protein localises to the cytoplasm. Functionally, one of the essential components for the initiation of protein synthesis. Protects formylmethionyl-tRNA from spontaneous hydrolysis and promotes its binding to the 30S ribosomal subunits. Also involved in the hydrolysis of GTP during the formation of the 70S ribosomal complex. This chain is Translation initiation factor IF-2, found in Frankia casuarinae (strain DSM 45818 / CECT 9043 / HFP020203 / CcI3).